An 880-amino-acid chain; its full sequence is Chaperone protein ClpB 1 (880 aa).

Positions 6 to 148 constitute a Clp R domain; it reads PNKFTDKAWE…EASIKAVRGS (143 aa). 2 repeat regions span residues 9 to 74 and 85 to 148; these read FTDK…TQRQ and LGRS…VRGS. The tract at residues 161–343 is NBD1; it reads EALQKFGRDL…RRFQQVYVDQ (183 aa). 208–215 is a binding site for ATP; that stretch reads GEPGVGKT. A linker region spans residues 344–554; sequence PSVENTISIL…IAEIVAKWTG (211 aa). Residues 394 to 530 are a coiled coil; sequence IDLVDEAAAQ…KEAKLLELQS (137 aa). The segment at 564–775 is NBD2; that stretch reads ERQKLLQLES…RVDDTILFHA (212 aa). 614-621 serves as a coordination point for ATP; sequence GPTGVGKT. Residues 776–880 are C-terminal; that stretch reads LSRSEMSHII…VKVSVTQITT (105 aa).

The protein belongs to the ClpA/ClpB family. In terms of assembly, homohexamer. The oligomerization is ATP-dependent.

It localises to the cytoplasm. In terms of biological role, part of a stress-induced multi-chaperone system, it is involved in the recovery of the cell from heat-induced damage, in cooperation with DnaK, DnaJ and GrpE. Acts before DnaK, in the processing of protein aggregates. Protein binding stimulates the ATPase activity; ATP hydrolysis unfolds the denatured protein aggregates, which probably helps expose new hydrophobic binding sites on the surface of ClpB-bound aggregates, contributing to the solubilization and refolding of denatured protein aggregates by DnaK. This Nostoc sp. (strain PCC 7120 / SAG 25.82 / UTEX 2576) protein is Chaperone protein ClpB 1 (clpB1).